The primary structure comprises 362 residues: 3-dehydroquinate synthase (362 aa).

NAD(+)-binding positions include 70–75, 104–108, 128–129, K141, and K150; these read DGESYK, GVVGD, and TT. Positions 183, 246, and 263 each coordinate Zn(2+).

This sequence belongs to the sugar phosphate cyclases superfamily. Dehydroquinate synthase family. Co(2+) is required as a cofactor. It depends on Zn(2+) as a cofactor. The cofactor is NAD(+).

The protein resides in the cytoplasm. It catalyses the reaction 7-phospho-2-dehydro-3-deoxy-D-arabino-heptonate = 3-dehydroquinate + phosphate. The protein operates within metabolic intermediate biosynthesis; chorismate biosynthesis; chorismate from D-erythrose 4-phosphate and phosphoenolpyruvate: step 2/7. Functionally, catalyzes the conversion of 3-deoxy-D-arabino-heptulosonate 7-phosphate (DAHP) to dehydroquinate (DHQ). This is 3-dehydroquinate synthase from Saccharophagus degradans (strain 2-40 / ATCC 43961 / DSM 17024).